The following is a 310-amino-acid chain: HPr kinase/phosphorylase 1 (310 aa).

Residues His-139 and Lys-160 contribute to the active site. Residue 154–161 (GQSGVGKS) coordinates ATP. Residue Ser-161 participates in Mg(2+) binding. Asp-178 (proton acceptor; for phosphorylation activity. Proton donor; for dephosphorylation activity) is an active-site residue. The segment at 202-211 (LEIRGLGIIN) is important for the catalytic mechanism of both phosphorylation and dephosphorylation. Glu-203 provides a ligand contact to Mg(2+). Residue Arg-244 is part of the active site. Residues 265 to 270 (PVRPGR) are important for the catalytic mechanism of dephosphorylation.

It belongs to the HPrK/P family. As to quaternary structure, homohexamer. It depends on Mg(2+) as a cofactor.

It catalyses the reaction [HPr protein]-L-serine + ATP = [HPr protein]-O-phospho-L-serine + ADP + H(+). The enzyme catalyses [HPr protein]-O-phospho-L-serine + phosphate + H(+) = [HPr protein]-L-serine + diphosphate. In terms of biological role, catalyzes the ATP- as well as the pyrophosphate-dependent phosphorylation of a specific serine residue in HPr, a phosphocarrier protein of the phosphoenolpyruvate-dependent sugar phosphotransferase system (PTS). HprK/P also catalyzes the pyrophosphate-producing, inorganic phosphate-dependent dephosphorylation (phosphorolysis) of seryl-phosphorylated HPr (P-Ser-HPr). The two antagonistic activities of HprK/P are regulated by several intracellular metabolites, which change their concentration in response to the absence or presence of rapidly metabolisable carbon sources (glucose, fructose, etc.) in the growth medium. Also phosphorylates/dephosphorylates the HPr-like catabolite repression protein crh on a specific serine residue. Therefore, by controlling the phosphorylation state of HPr and crh, HPrK/P is a sensor enzyme that plays a major role in the regulation of carbon metabolism and sugar transport: it mediates carbon catabolite repression (CCR), and regulates PTS-catalyzed carbohydrate uptake and inducer exclusion. This Oceanobacillus iheyensis (strain DSM 14371 / CIP 107618 / JCM 11309 / KCTC 3954 / HTE831) protein is HPr kinase/phosphorylase 1 (hprK1).